We begin with the raw amino-acid sequence, 136 residues long: MSRHQKPTGQSESPRKLRVGELVRHAVAEILAQGGVHDPVLETHLITVPEVRMSPDLKLATVYVMPLGGRDEKLVIAALEQHKRFLRGEVARRVNLKYAPEIRFRIDERFAEAERIEKLLRTPAVQKDLEPDSDQD.

The protein belongs to the RbfA family. As to quaternary structure, monomer. Binds 30S ribosomal subunits, but not 50S ribosomal subunits or 70S ribosomes.

The protein localises to the cytoplasm. One of several proteins that assist in the late maturation steps of the functional core of the 30S ribosomal subunit. Associates with free 30S ribosomal subunits (but not with 30S subunits that are part of 70S ribosomes or polysomes). Required for efficient processing of 16S rRNA. May interact with the 5'-terminal helix region of 16S rRNA. This is Ribosome-binding factor A from Rhodopseudomonas palustris (strain BisB5).